Here is a 262-residue protein sequence, read N- to C-terminus: Phosphate import ATP-binding protein PstB (262 aa).

One can recognise an ABC transporter domain in the interval 16-257 (IDVRNLNFYY…PHRKETEDYI (242 aa)). 48 to 55 (GPSGCGKS) serves as a coordination point for ATP.

The protein belongs to the ABC transporter superfamily. Phosphate importer (TC 3.A.1.7) family. In terms of assembly, the complex is composed of two ATP-binding proteins (PstB), two transmembrane proteins (PstC and PstA) and a solute-binding protein (PstS).

It localises to the cell inner membrane. The enzyme catalyses phosphate(out) + ATP + H2O = ADP + 2 phosphate(in) + H(+). In terms of biological role, part of the ABC transporter complex PstSACB involved in phosphate import. Responsible for energy coupling to the transport system. The sequence is that of Phosphate import ATP-binding protein PstB from Cupriavidus metallidurans (strain ATCC 43123 / DSM 2839 / NBRC 102507 / CH34) (Ralstonia metallidurans).